Here is a 203-residue protein sequence, read N- to C-terminus: Probable cytochrome c oxidase subunit 3 (203 aa).

Helical transmembrane passes span 30 to 50 (IVWL…YFTA), 70 to 90 (AVPV…GVFA), 102 to 122 (WYVI…YEYY), 142 to 162 (LATG…IFLL), and 179 to 199 (IVVS…FTVI).

Belongs to the cytochrome c oxidase subunit 3 family.

The protein localises to the cell membrane. The catalysed reaction is 4 Fe(II)-[cytochrome c] + O2 + 8 H(+)(in) = 4 Fe(III)-[cytochrome c] + 2 H2O + 4 H(+)(out). This is Probable cytochrome c oxidase subunit 3 (ctaE) from Mycolicibacterium paratuberculosis (strain ATCC BAA-968 / K-10) (Mycobacterium paratuberculosis).